Consider the following 1169-residue polypeptide: Transcription-repair-coupling factor (1169 aa).

One can recognise a Helicase ATP-binding domain in the interval D634 to I795. G647–T654 serves as a coordination point for ATP. The DEEQ box signature appears at D748–Q751. The Helicase C-terminal domain maps to V809 to N970.

In the N-terminal section; belongs to the UvrB family. This sequence in the C-terminal section; belongs to the helicase family. RecG subfamily.

It localises to the cytoplasm. Couples transcription and DNA repair by recognizing RNA polymerase (RNAP) stalled at DNA lesions. Mediates ATP-dependent release of RNAP and its truncated transcript from the DNA, and recruitment of nucleotide excision repair machinery to the damaged site. This Staphylococcus haemolyticus (strain JCSC1435) protein is Transcription-repair-coupling factor.